The chain runs to 357 residues: F-box only protein 25 (357 aa).

Positions methionine 1 to glutamate 83 are interaction with beta-actin. The F-box domain occupies leucine 225–glutamine 273.

Part of a SCF (SKP1-cullin-F-box) protein ligase complex consisting of FBXO25, SKP1, CUL1 and RBX1. Interacts directly with SKP1 and CUL1. Interacts (via C-terminus) with beta-actin (via N-terminus). In terms of tissue distribution, expressed in all tissues tested, except striated muscle (at protein level). Expressed predominantly in the cerebral cortex, the hippocampus and the Purkinje cell layer of the brain. Intestine and kidney show also significant levels.

The protein resides in the nucleus. It functions in the pathway protein modification; protein ubiquitination. Substrate-recognition component of the SCF (SKP1-CUL1-F-box protein)-type E3 ubiquitin ligase complex. May play a role in accumulation of expanded polyglutamine (polyQ) protein huntingtin (HTT). In Mus musculus (Mouse), this protein is F-box only protein 25 (Fbxo25).